The sequence spans 208 residues: Uracil phosphoribosyltransferase (208 aa).

Residues arginine 78, arginine 103, and 130–138 (DPMLATGGS) contribute to the 5-phospho-alpha-D-ribose 1-diphosphate site. Uracil is bound by residues isoleucine 193 and 198–200 (GDA). 5-phospho-alpha-D-ribose 1-diphosphate is bound at residue aspartate 199.

Belongs to the UPRTase family. Mg(2+) is required as a cofactor.

It carries out the reaction UMP + diphosphate = 5-phospho-alpha-D-ribose 1-diphosphate + uracil. It functions in the pathway pyrimidine metabolism; UMP biosynthesis via salvage pathway; UMP from uracil: step 1/1. Its activity is regulated as follows. Allosterically activated by GTP. Catalyzes the conversion of uracil and 5-phospho-alpha-D-ribose 1-diphosphate (PRPP) to UMP and diphosphate. The sequence is that of Uracil phosphoribosyltransferase from Vibrio parahaemolyticus serotype O3:K6 (strain RIMD 2210633).